A 519-amino-acid polypeptide reads, in one-letter code: Exodeoxyribonuclease 7 large subunit (519 aa).

Positions 500 to 519 (VGRGKTRKPKEEPPAQGSLL) are disordered.

It belongs to the XseA family. As to quaternary structure, heterooligomer composed of large and small subunits.

It localises to the cytoplasm. The catalysed reaction is Exonucleolytic cleavage in either 5'- to 3'- or 3'- to 5'-direction to yield nucleoside 5'-phosphates.. Functionally, bidirectionally degrades single-stranded DNA into large acid-insoluble oligonucleotides, which are then degraded further into small acid-soluble oligonucleotides. The chain is Exodeoxyribonuclease 7 large subunit from Cereibacter sphaeroides (strain KD131 / KCTC 12085) (Rhodobacter sphaeroides).